Here is a 636-residue protein sequence, read N- to C-terminus: Leucine-rich repeat and fibronectin type-III domain-containing protein 4 (636 aa).

The first 16 residues, 1 to 16, serve as a signal peptide directing secretion; that stretch reads MAPPLLLLLLASGAAA. The region spanning 17 to 48 is the LRRNT domain; it reads CPLPCVCQNLSESLSTLCAHRGLLFVPPNVDR. Over 17-518 the chain is Extracellular; the sequence is CPLPCVCQNL…LQAHVLGGTL (502 aa). 2 N-linked (GlcNAc...) asparagine glycosylation sites follow: Asn25 and Asn70. 7 LRR repeats span residues 49 to 70, 73 to 94, 97 to 118, 121 to 142, 146 to 169, 170 to 191, and 194 to 215; these read RTVE…DFRN, GLVD…SFGD, SLRS…SLRG, NLQH…AFDD, SLED…GSMP, ALHT…VFAQ, and QLSR…PLFS. An LRRCT domain is found at 234 to 280; that stretch reads NPLHCNCELLWLRRLARPDDLETCASPPTLAGRYFWAVPEGEFSCEP. The 87-residue stretch at 281–367 folds into the Ig-like domain; it reads PLIARHTQRL…GEATARVELR (87 aa). Residues Cys302 and Cys351 are joined by a disulfide bond. 4 N-linked (GlcNAc...) asparagine glycosylation sites follow: Asn324, Asn333, Asn376, and Asn440. Residues 405-502 enclose the Fibronectin type-III domain; it reads SEPAVQVTEV…GCAHFSTLPA (98 aa). A helical transmembrane segment spans residues 519-539; sequence TVAVGGVLVAALLVFTVALLV. Over 540 to 636 the chain is Cytoplasmic; that stretch reads RGRGAGNGRL…SAERLEESVV (97 aa). A disordered region spans residues 556–585; the sequence is VQSQTNGGTSPMPKSHPPRSPPPRPQRSCS. Over residues 569–580 the composition is skewed to pro residues; it reads KSHPPRSPPPRP. Phosphoserine is present on residues Ser585 and Ser627. The PDZ-binding signature appears at 633 to 636; the sequence is ESVV.

It belongs to the LRFN family. Can form heteromeric complexes with LRFN1, LRFN2, LRFN3 and LRFN5. Unable to form homophilic interactions across cell junctions. Interacts with DLG1, DLG2 and DLG3. Also interacts with DLG4. Post-translationally, glycosylated. Expressed in brain and testis. In the brain, weak, but broad expression in the cerebral cortex and diencephalic nuclei. Also detected in other parts of the central nervous system, including the olfactory bulb, pons, cerebellum, and medulla oblongata, as well as in the peripheral nervous system, such as the ganglia of cranial nerves and the dorsal root ganglion during gestation.

The protein resides in the membrane. Its function is as follows. Promotes neurite outgrowth in hippocampal neurons. May play a role in redistributing DLG4 to the cell periphery. This is Leucine-rich repeat and fibronectin type-III domain-containing protein 4 (Lrfn4) from Mus musculus (Mouse).